A 147-amino-acid chain; its full sequence is Hemoglobin subunit beta (147 aa).

In terms of domain architecture, Globin spans 3–147; that stretch reads EWTDDERAII…VVSALGRQYH (145 aa). Heme b-binding residues include H64 and H93.

This sequence belongs to the globin family. In terms of assembly, heterotetramer of two alpha chains and two beta chains. In terms of tissue distribution, red blood cells.

Its function is as follows. Involved in oxygen transport from gills to the various peripheral tissues. In Melanogrammus aeglefinus (Haddock), this protein is Hemoglobin subunit beta (hbb).